We begin with the raw amino-acid sequence, 331 residues long: QSPINIVSYDAKFRQRLPKLKFKPHMEKLKTEVTNHQNRAPEFEPEDGENLYVKLNNLVDGHYKFHNLHVHNGRTRRKGSEHSVNGRFTPMEAHLVFHHDDQTHFEPTRTKLGGAFPGHNDFVVVGVFLEVGDDGFGDEPDDEECKRILKGHHPDNNENGNGDNGNNGYNGDNGNNGDNGNNGYNGDNGNNGDNGNNGYNGDNGNNGDNGNNGENGNNGENGNNGENGNNGENGHKHGCRVKKAKHLSTILECAYRNDKVREFKKVGEEEGLDVHLTPEMPLPPLKNRHYYTYEGSLTTPPCTESVLWVVQKCHVQVSRRVLHALRNVEGY.

The Alpha-carbonic anhydrase domain occupies 1-331 (QSPINIVSYD…LHALRNVEGY (331 aa)). Residues H69, H71, and H94 each contribute to the Zn(2+) site. The tract at residues 138–240 (DEPDDEECKR…GENGHKHGCR (103 aa)) is disordered. Over residues 144 to 156 (ECKRILKGHHPDN) the composition is skewed to basic and acidic residues. A compositionally biased stretch (low complexity) spans 157–232 (NENGNGDNGN…NNGENGNNGE (76 aa)). A run of 24 repeats spans residues 162-164 (GDN), 165-167 (GNN), 168-170 (GYN), 171-173 (GDN), 174-176 (GNN), 177-179 (GDN), 180-182 (GNN), 183-185 (GYN), 186-188 (GDN), 189-191 (GNN), 192-194 (GDN), 195-197 (GNN), 198-200 (GYN), 201-203 (GDN), 204-206 (GNN), 207-209 (GDN), 210-212 (GNN), 213-215 (GEN), 216-218 (GNN), 219-221 (GEN), 222-224 (GNN), 225-227 (GEN), 228-229 (GN), and 231-233 (GEN). Residues 162–233 (GDNGNNGYNG…NGENGNNGEN (72 aa)) are 24 X 3 AA approximate tandem repeats of G-X-N. Position 298–299 (298–299 (TT)) interacts with substrate.

The protein belongs to the alpha-carbonic anhydrase family. In terms of assembly, homooligomer; disulfide-linked. May also be disulfide-linked to insoluble organic matrix. The cofactor is Zn(2+). In terms of tissue distribution, expressed in the mantle.

Its subcellular location is the secreted. The protein resides in the extracellular space. The protein localises to the extracellular matrix. The catalysed reaction is hydrogencarbonate + H(+) = CO2 + H2O. Its function is as follows. Acts as a negative regulator for calcification in the shells of mollusks. May function both as a calcium concentrator and as a carbonic anhydrase required for production of carbonate ions, which are assembled to CaCO(3) at mineralization sites. Is important for shell formation in both the calcitic prismatic layer and the aragonitic nacreous layer. Shows inhibitory activity of crystal formation when present in free state but, when attached to the insoluble matrix, may regulate the form and size of aragonite crystal. The polypeptide is Nacrein-like protein P1 (Mizuhopecten yessoensis (Japanese scallop)).